We begin with the raw amino-acid sequence, 412 residues long: Cellobiose 2-epimerase (412 aa).

The protein belongs to the cellobiose 2-epimerase family.

It carries out the reaction D-cellobiose = beta-D-glucosyl-(1-&gt;4)-D-mannopyranose. In terms of biological role, catalyzes the reversible epimerization of cellobiose to 4-O-beta-D-glucopyranosyl-D-mannose (Glc-Man). Can also use lactose, epilactose, mannobiose and cellotriose. Highly specific for oligosaccharides linked by the beta-1,4-glycosidic linkage. Shows preference for lactose. The chain is Cellobiose 2-epimerase (ce) from Rhodothermus marinus (Rhodothermus obamensis).